The chain runs to 616 residues: Dihydroxy-acid dehydratase (616 aa).

Asp81 provides a ligand contact to Mg(2+). Cys122 provides a ligand contact to [2Fe-2S] cluster. 2 residues coordinate Mg(2+): Asp123 and Lys124. An N6-carboxylysine modification is found at Lys124. Cys195 contacts [2Fe-2S] cluster. Residue Glu491 coordinates Mg(2+). The active-site Proton acceptor is Ser517.

The protein belongs to the IlvD/Edd family. As to quaternary structure, homodimer. The cofactor is [2Fe-2S] cluster. Mg(2+) serves as cofactor.

The catalysed reaction is (2R)-2,3-dihydroxy-3-methylbutanoate = 3-methyl-2-oxobutanoate + H2O. The enzyme catalyses (2R,3R)-2,3-dihydroxy-3-methylpentanoate = (S)-3-methyl-2-oxopentanoate + H2O. Its pathway is amino-acid biosynthesis; L-isoleucine biosynthesis; L-isoleucine from 2-oxobutanoate: step 3/4. It participates in amino-acid biosynthesis; L-valine biosynthesis; L-valine from pyruvate: step 3/4. Functionally, functions in the biosynthesis of branched-chain amino acids. Catalyzes the dehydration of (2R,3R)-2,3-dihydroxy-3-methylpentanoate (2,3-dihydroxy-3-methylvalerate) into 2-oxo-3-methylpentanoate (2-oxo-3-methylvalerate) and of (2R)-2,3-dihydroxy-3-methylbutanoate (2,3-dihydroxyisovalerate) into 2-oxo-3-methylbutanoate (2-oxoisovalerate), the penultimate precursor to L-isoleucine and L-valine, respectively. This chain is Dihydroxy-acid dehydratase, found in Shewanella loihica (strain ATCC BAA-1088 / PV-4).